A 45-amino-acid polypeptide reads, in one-letter code: Photosystem II reaction center protein K (45 aa).

The propeptide occupies 1-8; the sequence is MEAALLLA. The chain crosses the membrane as a helical span at residues 24 to 44; sequence LPLIPLFFLLLAFVWQAAVGF.

Belongs to the PsbK family. As to quaternary structure, PSII is composed of 1 copy each of membrane proteins PsbA, PsbB, PsbC, PsbD, PsbE, PsbF, PsbH, PsbI, PsbJ, PsbK, PsbL, PsbM, PsbT, PsbX, PsbY, PsbZ, Psb30/Ycf12, peripheral proteins PsbO, CyanoQ (PsbQ), PsbU, PsbV and a large number of cofactors. It forms dimeric complexes.

The protein localises to the cellular thylakoid membrane. One of the components of the core complex of photosystem II (PSII). PSII is a light-driven water:plastoquinone oxidoreductase that uses light energy to abstract electrons from H(2)O, generating O(2) and a proton gradient subsequently used for ATP formation. It consists of a core antenna complex that captures photons, and an electron transfer chain that converts photonic excitation into a charge separation. The sequence is that of Photosystem II reaction center protein K from Picosynechococcus sp. (strain ATCC 27264 / PCC 7002 / PR-6) (Agmenellum quadruplicatum).